Here is a 220-residue protein sequence, read N- to C-terminus: Deoxyribose-phosphate aldolase 2 (220 aa).

Aspartate 89 (proton donor/acceptor) is an active-site residue. Lysine 151 serves as the catalytic Schiff-base intermediate with acetaldehyde. The active-site Proton donor/acceptor is lysine 180.

The protein belongs to the DeoC/FbaB aldolase family. DeoC type 1 subfamily.

It is found in the cytoplasm. It carries out the reaction 2-deoxy-D-ribose 5-phosphate = D-glyceraldehyde 3-phosphate + acetaldehyde. It participates in carbohydrate degradation; 2-deoxy-D-ribose 1-phosphate degradation; D-glyceraldehyde 3-phosphate and acetaldehyde from 2-deoxy-alpha-D-ribose 1-phosphate: step 2/2. Its function is as follows. Catalyzes a reversible aldol reaction between acetaldehyde and D-glyceraldehyde 3-phosphate to generate 2-deoxy-D-ribose 5-phosphate. This is Deoxyribose-phosphate aldolase 2 from Staphylococcus aureus (strain MSSA476).